A 248-amino-acid chain; its full sequence is Adenylate kinase (248 aa).

ATP is bound at residue 37–42 (GAGKGT). An NMP region spans residues 57–86 (SPGNLLREEMNRNSPITAQIKDYVSKGQLV). AMP is bound by residues Arg63, 84-86 (QLV), 111-114 (GFPR), and Gln118. Positions 149 to 181 (GRRFDPITGNTYHIIYDPPPPDIADRVVVRTDD) are LID. Position 150 (Arg150) interacts with ATP. Arg178 and Arg189 together coordinate AMP.

Belongs to the adenylate kinase family. Monomer.

Its subcellular location is the cytoplasm. The enzyme catalyses AMP + ATP = 2 ADP. Catalyzes the reversible transfer of the terminal phosphate group between ATP and AMP. Plays an important role in cellular energy homeostasis and in adenine nucleotide metabolism. The chain is Adenylate kinase from Giardia intestinalis (Giardia lamblia).